The primary structure comprises 88 residues: Small ribosomal subunit protein bS20 (88 aa).

It belongs to the bacterial ribosomal protein bS20 family.

Its function is as follows. Binds directly to 16S ribosomal RNA. This Natranaerobius thermophilus (strain ATCC BAA-1301 / DSM 18059 / JW/NM-WN-LF) protein is Small ribosomal subunit protein bS20.